The primary structure comprises 352 residues: Protein-glutamate methylesterase/protein-glutamine glutaminase 1 (352 aa).

The 118-residue stretch at 5-122 (KVLVVDDSAF…SLDVLSVKEE (118 aa)) folds into the Response regulatory domain. 4-aspartylphosphate is present on Asp56. Residues 155–352 (PDQDRKLNKL…EITEEVLSML (198 aa)) form the CheB-type methylesterase domain. Residues Ser170, His197, and Asp297 contribute to the active site.

This sequence belongs to the CheB family. Post-translationally, phosphorylated by CheA. Phosphorylation of the N-terminal regulatory domain activates the methylesterase activity.

The protein localises to the cytoplasm. It carries out the reaction [protein]-L-glutamate 5-O-methyl ester + H2O = L-glutamyl-[protein] + methanol + H(+). The catalysed reaction is L-glutaminyl-[protein] + H2O = L-glutamyl-[protein] + NH4(+). Its function is as follows. Involved in chemotaxis. Part of a chemotaxis signal transduction system that modulates chemotaxis in response to various stimuli. Catalyzes the demethylation of specific methylglutamate residues introduced into the chemoreceptors (methyl-accepting chemotaxis proteins or MCP) by CheR. Also mediates the irreversible deamidation of specific glutamine residues to glutamic acid. The protein is Protein-glutamate methylesterase/protein-glutamine glutaminase 1 of Syntrophomonas wolfei subsp. wolfei (strain DSM 2245B / Goettingen).